The following is a 195-amino-acid chain: Xanthine phosphoribosyltransferase (195 aa).

Positions 20 and 27 each coordinate xanthine. Residue 128–132 coordinates 5-phospho-alpha-D-ribose 1-diphosphate; it reads ANGQA. K156 contributes to the xanthine binding site.

Belongs to the purine/pyrimidine phosphoribosyltransferase family. Xpt subfamily. Homodimer.

The protein localises to the cytoplasm. The catalysed reaction is XMP + diphosphate = xanthine + 5-phospho-alpha-D-ribose 1-diphosphate. Its pathway is purine metabolism; XMP biosynthesis via salvage pathway; XMP from xanthine: step 1/1. Its function is as follows. Converts the preformed base xanthine, a product of nucleic acid breakdown, to xanthosine 5'-monophosphate (XMP), so it can be reused for RNA or DNA synthesis. The sequence is that of Xanthine phosphoribosyltransferase from Latilactobacillus sakei subsp. sakei (strain 23K) (Lactobacillus sakei subsp. sakei).